The primary structure comprises 677 residues: Serine/threonine-protein kinase YPK2/YKR2 (677 aa).

Basic residues predominate over residues 1 to 12 (MHSWRISKFKLG). The interval 1-115 (MHSWRISKFK…ETQGPSSESG (115 aa)) is disordered. The span at 41–56 (KHHDGSPKNHNHEHEH) shows a compositional bias: basic and acidic residues. Polar residues-rich tracts occupy residues 61–93 (INTN…NDNS) and 101–115 (SQSS…SESG). 2 positions are modified to phosphothreonine: T63 and T66. S72 is subject to Phosphoserine. Residues 344-599 (FDLLKVIGKG…TDEIRNHPFF (256 aa)) enclose the Protein kinase domain. Residues 350 to 358 (IGKGSFGKV) and K373 contribute to the ATP site. D467 serves as the catalytic Proton acceptor. A Phosphothreonine modification is found at T499. T501 carries the phosphothreonine; by PKH2 modification. The AGC-kinase C-terminal domain occupies 600-670 (KDISWKKLLL…IGDEQLGDSP (71 aa)). S641 carries the post-translational modification Phosphoserine; by TOR2. S650 carries the post-translational modification Phosphoserine. T659 bears the Phosphothreonine; by TOR2 mark. A Phosphoserine modification is found at S669.

This sequence belongs to the protein kinase superfamily. AGC Ser/Thr protein kinase family. RAC subfamily. In terms of processing, autophosphorylated. Phosphorylated by PKH2 and TOR2.

It localises to the cytoplasm. It carries out the reaction L-seryl-[protein] + ATP = O-phospho-L-seryl-[protein] + ADP + H(+). The catalysed reaction is L-threonyl-[protein] + ATP = O-phospho-L-threonyl-[protein] + ADP + H(+). With respect to regulation, activated by phytosphingosine (PHS), a sphingoid long chain base. Activated by PKH2 phosphorylation. Kinase activity is regulated by TOR2 via direct phosphorylation of Ser-641 and Thr-659. Plays an essential role in the proliferation of yeast cells. Involved in a signaling pathway, required for optimal cell wall integrity, that acts in parallel with the PKC1-SLT2-dependent pathway. A substrate of TOR complex 2 (TORC2) and required for TORC2 to regulate spatial aspects of cell growth. Phosphorylation of residue Thr-501 is indispensable for function. May act as a downstream kinase in the sphingolipid-mediated signaling pathway. The protein is Serine/threonine-protein kinase YPK2/YKR2 (YPK2) of Saccharomyces cerevisiae (strain ATCC 204508 / S288c) (Baker's yeast).